The chain runs to 269 residues: 4-hydroxy-tetrahydrodipicolinate reductase (269 aa).

Residues 8-13 (GAAGRM) and glutamate 34 contribute to the NAD(+) site. Residue arginine 35 coordinates NADP(+). Residues 98–100 (GTT) and 122–125 (APNY) contribute to the NAD(+) site. The Proton donor/acceptor role is filled by histidine 155. Histidine 156 is a (S)-2,3,4,5-tetrahydrodipicolinate binding site. Catalysis depends on lysine 159, which acts as the Proton donor. A (S)-2,3,4,5-tetrahydrodipicolinate-binding site is contributed by 165–166 (GT).

It belongs to the DapB family.

Its subcellular location is the cytoplasm. It carries out the reaction (S)-2,3,4,5-tetrahydrodipicolinate + NAD(+) + H2O = (2S,4S)-4-hydroxy-2,3,4,5-tetrahydrodipicolinate + NADH + H(+). It catalyses the reaction (S)-2,3,4,5-tetrahydrodipicolinate + NADP(+) + H2O = (2S,4S)-4-hydroxy-2,3,4,5-tetrahydrodipicolinate + NADPH + H(+). Its pathway is amino-acid biosynthesis; L-lysine biosynthesis via DAP pathway; (S)-tetrahydrodipicolinate from L-aspartate: step 4/4. Functionally, catalyzes the conversion of 4-hydroxy-tetrahydrodipicolinate (HTPA) to tetrahydrodipicolinate. This chain is 4-hydroxy-tetrahydrodipicolinate reductase, found in Vibrio parahaemolyticus serotype O3:K6 (strain RIMD 2210633).